Consider the following 331-residue polypeptide: 6-phosphogluconolactonase (331 aa).

This sequence belongs to the cycloisomerase 2 family.

It carries out the reaction 6-phospho-D-glucono-1,5-lactone + H2O = 6-phospho-D-gluconate + H(+). It participates in carbohydrate degradation; pentose phosphate pathway; D-ribulose 5-phosphate from D-glucose 6-phosphate (oxidative stage): step 2/3. In terms of biological role, catalyzes the hydrolysis of 6-phosphogluconolactone to 6-phosphogluconate. This Salmonella typhi protein is 6-phosphogluconolactonase.